The primary structure comprises 782 residues: MGSDWDEIKRLAADFQKAQLTSTLQKLSERNCVEIVTLLLEKQMLEVVFTNDGKEYITPDHLEREIQDELYVNGGRANLVEVSKTLNVDLSRIELLAERISAENQSVHLVLGQLIDEDYISHIAQEINEKLVQRGEVSISELASQFDLPSDFLQHDVVEKHLGKIIKGRQDASNPRVFFTQAYIQRCKAKIRGALAAITRPINVAVILQKIGVQEKIFYSLLDEIAPAGQVTSKQANSQYVPHIYAKTQADWVNSFYKQNSFLEYDAIQKLGISDAKSYIRKQFPNEEFLYLKRVALGARLVELTVVTALNECSATKQYLDLTTILPSNLSEEDIEEVFSTIMAQKHSNPSNFVYLDGIVFSQPYLAQLVQPCQALAESQAKAAIDGGVYQQYIVEKTLAQKGNVSTQELEDEGKVDKRDERRKKASSGKAGGGAQGRETKTKSTKKHQRGKAAAQFDSDDEDDAQQGSRGGGGASKKAVKPLELVKTADIVKLITASLEEEGLEHLSKSIASLYTNQFNQTALARAQELFEATPQTNRRQTHAAIQDRINTLLIDIRLYEKGLKLFPQDTQTQLVKYLLKSLGNEICNELSLYVASECNLTVKNTNLNVDQRNKLAQECEAQYRAALLEQNKALNKSIDDFELATETVLKTCSMIIKKVDKKKDRLLIADHKKKLQKQLLECNEPALLLHLAALILFTTITGSILHASGKFVSAILQHIRGSLNEDQNALLLRYHDLVLQVLQAIPDSNESKLANEHLQTMQNQVVELAQNFSRASISKAD.

The disordered stretch occupies residues 404-478; sequence NVSTQELEDE…SRGGGGASKK (75 aa).

The protein belongs to the UFL1 family.

Functionally, E3 UFM1-protein ligase that mediates ufmylation of target proteins. The sequence is that of E3 UFM1-protein ligase 1 homolog from Drosophila melanogaster (Fruit fly).